We begin with the raw amino-acid sequence, 154 residues long: Aspartate carbamoyltransferase regulatory chain (154 aa).

Residues C109, C114, C138, and C141 each coordinate Zn(2+).

The protein belongs to the PyrI family. In terms of assembly, contains catalytic and regulatory chains. It depends on Zn(2+) as a cofactor.

Functionally, involved in allosteric regulation of aspartate carbamoyltransferase. The sequence is that of Aspartate carbamoyltransferase regulatory chain from Pectobacterium carotovorum subsp. carotovorum (strain PC1).